A 456-amino-acid chain; its full sequence is uncharacterized protein (456 aa).

A YrdC-like domain is found at 277–440 (IKNTKTIKQL…TKQLVRTTAK (164 aa)).

This is an uncharacterized protein from Mycoplasma genitalium (strain ATCC 33530 / DSM 19775 / NCTC 10195 / G37) (Mycoplasmoides genitalium).